We begin with the raw amino-acid sequence, 475 residues long: Ribulose bisphosphate carboxylase large chain (475 aa).

The propeptide occupies 1–2 (MS). Pro3 carries the post-translational modification N-acetylproline. Lys14 carries the post-translational modification N6,N6,N6-trimethyllysine. Substrate is bound by residues Asn123 and Thr173. Lys175 (proton acceptor) is an active-site residue. Lys177 is a substrate binding site. 3 residues coordinate Mg(2+): Lys201, Asp203, and Glu204. Lys201 is subject to N6-carboxylysine. His294 (proton acceptor) is an active-site residue. Substrate contacts are provided by Arg295, His327, and Ser379.

The protein belongs to the RuBisCO large chain family. Type I subfamily. Heterohexadecamer of 8 large chains and 8 small chains; disulfide-linked. The disulfide link is formed within the large subunit homodimers. Mg(2+) serves as cofactor. Post-translationally, the disulfide bond which can form in the large chain dimeric partners within the hexadecamer appears to be associated with oxidative stress and protein turnover.

The protein resides in the plastid. It localises to the chloroplast. It catalyses the reaction 2 (2R)-3-phosphoglycerate + 2 H(+) = D-ribulose 1,5-bisphosphate + CO2 + H2O. It carries out the reaction D-ribulose 1,5-bisphosphate + O2 = 2-phosphoglycolate + (2R)-3-phosphoglycerate + 2 H(+). In terms of biological role, ruBisCO catalyzes two reactions: the carboxylation of D-ribulose 1,5-bisphosphate, the primary event in carbon dioxide fixation, as well as the oxidative fragmentation of the pentose substrate in the photorespiration process. Both reactions occur simultaneously and in competition at the same active site. This is Ribulose bisphosphate carboxylase large chain from Calycanthus floridus var. glaucus (Eastern sweetshrub).